The sequence spans 31 residues: Cycloviolacin-O23 (31 aa).

The segment at residues 1–31 (GLPTCGETCFGGTCNTPGCTCDSSWPICTHN) is a cross-link (cyclopeptide (Gly-Asn)). Intrachain disulfides connect Cys5–Cys19, Cys9–Cys21, and Cys14–Cys28.

In terms of processing, this is a cyclic peptide. As to expression, expressed in leaves but not in petals, petioles, roots and runners (at protein level).

In terms of biological role, probably participates in a plant defense mechanism. This chain is Cycloviolacin-O23, found in Viola odorata (Sweet violet).